A 720-amino-acid chain; its full sequence is Pollen receptor-like kinase 1 (720 aa).

The LRR 1; degenerate repeat unit spans residues leucine 40–valine 64. The LRR 2; degenerate repeat unit spans residues leucine 123–isoleucine 146. LRR repeat units lie at residues leucine 154 to proline 179, leucine 226 to proline 248, and asparagine 249 to aspartate 273. The interval leucine 288 to isoleucine 319 is disordered. Over residues alanine 291–aspartate 317 the composition is skewed to polar residues. A helical membrane pass occupies residues methionine 330–isoleucine 350. 2 stretches are compositionally biased toward polar residues: residues serine 356–alanine 382 and leucine 389–lysine 405. The segment at serine 356–proline 409 is disordered. The Protein kinase domain maps to arginine 434 to leucine 702. Residues leucine 440–serine 448 and lysine 462 contribute to the ATP site.

Belongs to the protein kinase superfamily. As to quaternary structure, interacts with KIP1. Post-translationally, autophosphorylated. As to expression, expressed in mature pollen grains and pollen tubes, but not in style, petal, leaf, root or sepal. Very low expression in the ovary.

It is found in the microsome membrane. The protein resides in the cytoplasm. It catalyses the reaction L-seryl-[protein] + ATP = O-phospho-L-seryl-[protein] + ADP + H(+). The enzyme catalyses L-threonyl-[protein] + ATP = O-phospho-L-threonyl-[protein] + ADP + H(+). It carries out the reaction L-tyrosyl-[protein] + ATP = O-phospho-L-tyrosyl-[protein] + ADP + H(+). Its function is as follows. Dual-specificity kinase with both serine/threonine and tyrosine kinase activities. Required for postmeiotic development of microspores. Involved in embryo sac development at the late stages of megagametogenesis. Involved in the phosphorylation of KIP1. The polypeptide is Pollen receptor-like kinase 1 (Petunia integrifolia (Violet-flowered petunia)).